The chain runs to 248 residues: tRNA uridine(34) hydroxylase (248 aa).

Positions 128-222 (EGRPVVMLDT…YFEEVGGAHY (95 aa)) constitute a Rhodanese domain. C182 acts as the Cysteine persulfide intermediate in catalysis.

Belongs to the TrhO family.

The catalysed reaction is uridine(34) in tRNA + AH2 + O2 = 5-hydroxyuridine(34) in tRNA + A + H2O. Its function is as follows. Catalyzes oxygen-dependent 5-hydroxyuridine (ho5U) modification at position 34 in tRNAs. In Thiobacillus denitrificans (strain ATCC 25259 / T1), this protein is tRNA uridine(34) hydroxylase.